Reading from the N-terminus, the 390-residue chain is COP9/Signalosome and eIF3 complex-shared subunit 1 (390 aa).

The 164-residue stretch at 188–351 (QAAKVMTALL…RTLIVSSYQH (164 aa)) folds into the PCI domain.

The protein belongs to the eIF-3 subunit M family. Component of the eukaryotic translation initiation factor 3 (eIF-3) complex. Within the eIF-3 complex, interacts directly with eif-3.F. Component of the CSN complex, composed of csn-1, csn-2, csn-3, csn-4, csn-5, csn-6 and csn-7. Within the CSN complex, interacts directly with csn-1 and csn-4.

It is found in the cytoplasm. Component of the eukaryotic translation initiation factor 3 (eIF-3) complex, which is involved in protein synthesis of a specialized repertoire of mRNAs and, together with other initiation factors, stimulates binding of mRNA and methionyl-tRNAi to the 40S ribosome. The eIF-3 complex specifically targets and initiates translation of a subset of mRNAs involved in cell proliferation (Potential). Component of the COP9 signalosome complex (CSN), a complex involved in various cellular and developmental processes. The CSN complex is an essential regulator of the ubiquitin (Ubl) conjugation pathway by mediating the deneddylation of the cullin subunits of the SCF-type E3 ligase complexes, leading to decrease the Ubl ligase activity of SCF. The CSN complex plays an essential role in embryogenesis and oogenesis and is required to regulate microtubule stability in the early embryo. Mediates mei-1 targeting for degradation at the meiosis to mitosis transition via deneddylation of cul-3. The polypeptide is COP9/Signalosome and eIF3 complex-shared subunit 1 (Caenorhabditis elegans).